The following is a 425-amino-acid chain: Light-independent protochlorophyllide reductase subunit N (425 aa).

[4Fe-4S] cluster contacts are provided by cysteine 17, cysteine 42, and cysteine 103.

The protein belongs to the BchN/ChlN family. Protochlorophyllide reductase is composed of three subunits; ChlL, ChlN and ChlB. Forms a heterotetramer of two ChlB and two ChlN subunits. The cofactor is [4Fe-4S] cluster.

The enzyme catalyses chlorophyllide a + oxidized 2[4Fe-4S]-[ferredoxin] + 2 ADP + 2 phosphate = protochlorophyllide a + reduced 2[4Fe-4S]-[ferredoxin] + 2 ATP + 2 H2O. The protein operates within porphyrin-containing compound metabolism; chlorophyll biosynthesis (light-independent). Functionally, component of the dark-operative protochlorophyllide reductase (DPOR) that uses Mg-ATP and reduced ferredoxin to reduce ring D of protochlorophyllide (Pchlide) to form chlorophyllide a (Chlide). This reaction is light-independent. The NB-protein (ChlN-ChlB) is the catalytic component of the complex. The chain is Light-independent protochlorophyllide reductase subunit N from Synechococcus sp. (strain CC9605).